A 593-amino-acid polypeptide reads, in one-letter code: Ribonuclease Y (593 aa).

The chain crosses the membrane as a helical span at residues 6–26 (ILLMYLIVGLLTALTVLIFVF). The KH domain occupies 218 to 278 (DPIKVKKVTD…IKLEVAYNAL (61 aa)). Positions 354–464 (VLTHSIEAAQ…TKIADFLSAA (111 aa)) constitute an HD domain.

The protein belongs to the RNase Y family.

The protein localises to the cell membrane. Its function is as follows. Endoribonuclease that initiates mRNA decay. The sequence is that of Ribonuclease Y from Mycoplasmoides gallisepticum (strain R(low / passage 15 / clone 2)) (Mycoplasma gallisepticum).